Consider the following 240-residue polypeptide: Probable hydroxyacylglutathione hydrolase (240 aa).

6 residues coordinate Zn(2+): histidine 33, histidine 35, aspartate 37, histidine 38, histidine 95, and aspartate 119. Substrate contacts are provided by residues arginine 128, 158–160, and 234–237; these read HEY and REEK. Residue histidine 158 coordinates Zn(2+).

This sequence belongs to the metallo-beta-lactamase superfamily. Glyoxalase II family. It depends on Zn(2+) as a cofactor.

It catalyses the reaction an S-(2-hydroxyacyl)glutathione + H2O = a 2-hydroxy carboxylate + glutathione + H(+). It functions in the pathway secondary metabolite metabolism; methylglyoxal degradation; (R)-lactate from methylglyoxal: step 2/2. In terms of biological role, thiolesterase that catalyzes the hydrolysis of S-D-lactoyl-glutathione to form glutathione and D-lactic acid. This Schistosoma mansoni (Blood fluke) protein is Probable hydroxyacylglutathione hydrolase.